The chain runs to 122 residues: Large ribosomal subunit protein uL14 (122 aa).

The protein belongs to the universal ribosomal protein uL14 family. In terms of assembly, part of the 50S ribosomal subunit. Forms a cluster with proteins L3 and L19. In the 70S ribosome, L14 and L19 interact and together make contacts with the 16S rRNA in bridges B5 and B8.

Functionally, binds to 23S rRNA. Forms part of two intersubunit bridges in the 70S ribosome. The protein is Large ribosomal subunit protein uL14 of Herpetosiphon aurantiacus (strain ATCC 23779 / DSM 785 / 114-95).